Reading from the N-terminus, the 197-residue chain is Probable GTP-binding protein EngB (197 aa).

One can recognise an EngB-type G domain in the interval 22–197; that stretch reads TGVEVAFAGR…FKEKLDTWYQ (176 aa). GTP contacts are provided by residues 30-37, 57-61, 75-78, 142-145, and 177-179; these read GRSNAGKS, GRTQL, DLPG, TKAD, and FSS. Residues S37 and T59 each coordinate Mg(2+).

Belongs to the TRAFAC class TrmE-Era-EngA-EngB-Septin-like GTPase superfamily. EngB GTPase family. It depends on Mg(2+) as a cofactor.

Its function is as follows. Necessary for normal cell division and for the maintenance of normal septation. In Francisella tularensis subsp. tularensis (strain FSC 198), this protein is Probable GTP-binding protein EngB.